A 226-amino-acid chain; its full sequence is Histidine biosynthesis bifunctional protein HisIE (226 aa).

Residues 1–131 form a phosphoribosyl-AMP cyclohydrolase region; that stretch reads MMPMNQEFIQ…STFNRPLSNT (131 aa). The phosphoribosyl-ATP pyrophosphohydrolase stretch occupies residues 132 to 226; the sequence is CSELFEVIKD…KRRQSKSNPK (95 aa).

In the N-terminal section; belongs to the PRA-CH family. The protein in the C-terminal section; belongs to the PRA-PH family.

Its subcellular location is the cytoplasm. It catalyses the reaction 1-(5-phospho-beta-D-ribosyl)-ATP + H2O = 1-(5-phospho-beta-D-ribosyl)-5'-AMP + diphosphate + H(+). The catalysed reaction is 1-(5-phospho-beta-D-ribosyl)-5'-AMP + H2O = 1-(5-phospho-beta-D-ribosyl)-5-[(5-phospho-beta-D-ribosylamino)methylideneamino]imidazole-4-carboxamide. Its pathway is amino-acid biosynthesis; L-histidine biosynthesis; L-histidine from 5-phospho-alpha-D-ribose 1-diphosphate: step 2/9. The protein operates within amino-acid biosynthesis; L-histidine biosynthesis; L-histidine from 5-phospho-alpha-D-ribose 1-diphosphate: step 3/9. The sequence is that of Histidine biosynthesis bifunctional protein HisIE from Prochlorococcus marinus (strain SARG / CCMP1375 / SS120).